A 380-amino-acid polypeptide reads, in one-letter code: Chaperone protein DnaJ (380 aa).

The J domain occupies 5–72 (DYYETLGVAK…QKRAAYDQYG (68 aa)). The CR-type zinc finger occupies 140–218 (GKDTQIRIPS…CNGAGRIKSN (79 aa)). Positions 153, 156, 170, 173, 192, 195, 206, and 209 each coordinate Zn(2+). 4 CXXCXGXG motif repeats span residues 153–160 (CSTCDGTG), 170–177 (CPTCSGSG), 192–199 (CPSCHGTG), and 206–213 (CTACNGAG). The tract at residues 357-380 (LKKGGERHSPNAKSWTDRVKDLFK) is disordered.

The protein belongs to the DnaJ family. In terms of assembly, homodimer. Zn(2+) is required as a cofactor.

Its subcellular location is the cytoplasm. Participates actively in the response to hyperosmotic and heat shock by preventing the aggregation of stress-denatured proteins and by disaggregating proteins, also in an autonomous, DnaK-independent fashion. Unfolded proteins bind initially to DnaJ; upon interaction with the DnaJ-bound protein, DnaK hydrolyzes its bound ATP, resulting in the formation of a stable complex. GrpE releases ADP from DnaK; ATP binding to DnaK triggers the release of the substrate protein, thus completing the reaction cycle. Several rounds of ATP-dependent interactions between DnaJ, DnaK and GrpE are required for fully efficient folding. Also involved, together with DnaK and GrpE, in the DNA replication of plasmids through activation of initiation proteins. In Methylibium petroleiphilum (strain ATCC BAA-1232 / LMG 22953 / PM1), this protein is Chaperone protein DnaJ.